The following is a 433-amino-acid chain: Probable carboxypeptidase ATEG_02905 (433 aa).

An N-terminal signal peptide occupies residues 1–18 (MKSAISLLLASAATYVGA). The disordered stretch occupies residues 20-40 (PHPEPPQLVLSPSTSTGVHGD). A glycan (N-linked (GlcNAc...) asparagine) is linked at Asn92. Asp161 is a Zn(2+) binding site. Glu193 acts as the Proton acceptor in catalysis. Glu194 provides a ligand contact to Zn(2+).

The protein belongs to the peptidase M20A family. Zn(2+) is required as a cofactor.

The protein localises to the secreted. The sequence is that of Probable carboxypeptidase ATEG_02905 from Aspergillus terreus (strain NIH 2624 / FGSC A1156).